Here is a 146-residue protein sequence, read N- to C-terminus: Aspartate 1-decarboxylase (146 aa).

Ser-25 serves as the catalytic Schiff-base intermediate with substrate; via pyruvic acid. Pyruvic acid (Ser) is present on Ser-25. Residue Thr-57 participates in substrate binding. Tyr-58 functions as the Proton donor in the catalytic mechanism. 73–75 (GPA) contributes to the substrate binding site.

It belongs to the PanD family. Heterooctamer of four alpha and four beta subunits. Pyruvate is required as a cofactor. In terms of processing, is synthesized initially as an inactive proenzyme, which is activated by self-cleavage at a specific serine bond to produce a beta-subunit with a hydroxyl group at its C-terminus and an alpha-subunit with a pyruvoyl group at its N-terminus.

It is found in the cytoplasm. The enzyme catalyses L-aspartate + H(+) = beta-alanine + CO2. It functions in the pathway cofactor biosynthesis; (R)-pantothenate biosynthesis; beta-alanine from L-aspartate: step 1/1. Its function is as follows. Catalyzes the pyruvoyl-dependent decarboxylation of aspartate to produce beta-alanine. This Salinibacter ruber (strain DSM 13855 / M31) protein is Aspartate 1-decarboxylase.